A 310-amino-acid polypeptide reads, in one-letter code: p-hydroxybenzoic acid efflux pump subunit AaeA (310 aa).

The helical transmembrane segment at 12 to 32 threads the bilayer; the sequence is AITVVLVILAFIAIFNAWVYY.

Belongs to the membrane fusion protein (MFP) (TC 8.A.1) family.

The protein localises to the cell inner membrane. Functionally, forms an efflux pump with AaeB. This chain is p-hydroxybenzoic acid efflux pump subunit AaeA, found in Escherichia coli O139:H28 (strain E24377A / ETEC).